Consider the following 354-residue polypeptide: Src kinase-associated phosphoprotein 1 (354 aa).

A PH domain is found at 107 to 210 (NVIKQGYLEK…WVDQISFLLK (104 aa)). A phosphotyrosine mark is found at Tyr-142 and Tyr-236. Tyr-267 and Tyr-290 each carry phosphotyrosine; by FYN. An interaction with FYB1 region spans residues 285–290 (RRRVDY). The 62-residue stretch at 289-350 (DYADYYQGLW…PKDYLTTAFE (62 aa)) folds into the SH3 domain.

This sequence belongs to the SKAP family. As to quaternary structure, homodimer. Interacts with FYN. Interacts with PTPRC. Interacts with GRB2 when phosphorylated on Tyr-267. Interacts with FYB1, which is required for SKAP2 protein stability. Part of a complex consisting of SKAP1, FYB1 and CLNK. Interacts with RASGRP1. Interacts with FYB2. Phosphorylated on tyrosines. Phosphorylation by FYN on Tyr-267 is required for GRB2 interaction. Phosphorylation by FYN on Tyr-290 abolishes interaction with FYB1. Tyr-236 is dephosphorylated by PTPRC. Expressed in mast cells (at protein level).

It is found in the cytoplasm. The protein resides in the nucleus. Its subcellular location is the cell membrane. Functionally, positively regulates T-cell receptor signaling by enhancing the MAP kinase pathway. Required for optimal conjugation between T-cells and antigen-presenting cells by promoting the clustering of integrin ITGAL on the surface of T-cells. May be involved in high affinity immunoglobulin epsilon receptor signaling in mast cells. This is Src kinase-associated phosphoprotein 1 (Skap1) from Rattus norvegicus (Rat).